The chain runs to 180 residues: Adenine phosphoribosyltransferase (180 aa).

Residue Ser2 is modified to N-acetylserine. Ser15 and Ser30 each carry phosphoserine. Tyr60 carries the phosphotyrosine modification. Ser66 carries the post-translational modification Phosphoserine. Lys114 is modified (N6-acetyllysine). Residue Thr135 is modified to Phosphothreonine.

Belongs to the purine/pyrimidine phosphoribosyltransferase family. As to quaternary structure, homodimer.

The protein resides in the cytoplasm. The enzyme catalyses AMP + diphosphate = 5-phospho-alpha-D-ribose 1-diphosphate + adenine. It participates in purine metabolism; AMP biosynthesis via salvage pathway; AMP from adenine: step 1/1. Its function is as follows. Catalyzes a salvage reaction resulting in the formation of AMP, that is energically less costly than de novo synthesis. The chain is Adenine phosphoribosyltransferase from Stochomys longicaudatus (Target rat).